The primary structure comprises 488 residues: (S)-N-methylcoclaurine 3'-hydroxylase isozyme 2 (488 aa).

Residues 3 to 23 form a helical membrane-spanning segment; sequence VVTVALIAVIISSILYLLFGS. Cys-430 is a heme binding site.

The protein belongs to the cytochrome P450 family. Heme serves as cofactor.

The protein localises to the endoplasmic reticulum membrane. It localises to the microsome membrane. It carries out the reaction (S)-N-methylcoclaurine + reduced [NADPH--hemoprotein reductase] + O2 = (S)-3'-hydroxy-N-methylcoclaurine + oxidized [NADPH--hemoprotein reductase] + H2O + H(+). The protein operates within alkaloid biosynthesis; (S)-reticuline biosynthesis; (S)-reticuline from (S)-norcoclaurine: step 3/4. Functionally, 3'-hydroxylation of (S)-N-methylcoclaurine. In Eschscholzia californica (California poppy), this protein is (S)-N-methylcoclaurine 3'-hydroxylase isozyme 2 (CYP80B2).